The sequence spans 200 residues: NADH-quinone oxidoreductase subunit C (200 aa).

The protein belongs to the complex I 30 kDa subunit family. As to quaternary structure, NDH-1 is composed of 14 different subunits. Subunits NuoB, C, D, E, F, and G constitute the peripheral sector of the complex.

It is found in the cell inner membrane. The catalysed reaction is a quinone + NADH + 5 H(+)(in) = a quinol + NAD(+) + 4 H(+)(out). Its function is as follows. NDH-1 shuttles electrons from NADH, via FMN and iron-sulfur (Fe-S) centers, to quinones in the respiratory chain. The immediate electron acceptor for the enzyme in this species is believed to be ubiquinone. Couples the redox reaction to proton translocation (for every two electrons transferred, four hydrogen ions are translocated across the cytoplasmic membrane), and thus conserves the redox energy in a proton gradient. The chain is NADH-quinone oxidoreductase subunit C from Burkholderia ambifaria (strain ATCC BAA-244 / DSM 16087 / CCUG 44356 / LMG 19182 / AMMD) (Burkholderia cepacia (strain AMMD)).